Consider the following 615-residue polypeptide: Increased rDNA silencing protein 4 (615 aa).

Disordered stretches follow at residues 38–135 (SNEV…SSHS), 152–260 (LLGI…NRSQ), 277–304 (PSIA…NYSS), and 323–445 (KPKH…NEDK). Over residues 50–65 (VSRNPQTRLSEPSLQK) the composition is skewed to polar residues. Low complexity-rich tracts occupy residues 121–135 (HSQS…SSHS) and 157–168 (SRSSSRNGSNES). Ser-180 carries the phosphoserine modification. Residues 184-198 (LLTSFSSGRRLSSSS) show a composition bias toward low complexity. Polar residues predominate over residues 248–260 (NPDTSDVISNRSQ). Residues 281–290 (SSNTTTTTSN) are compositionally biased toward low complexity. The span at 365–377 (ENDHASSLHEGNL) shows a compositional bias: basic and acidic residues. Over residues 389–402 (DVYDDTDSDSESDQ) the composition is skewed to acidic residues. Over residues 409-438 (KPRKRDRIKRKIRNSANKTAHHRPIHRTRD) the composition is skewed to basic residues. The region spanning 460–571 (ERKRYESMWV…QCVWDSVDRY (112 aa)) is the EH domain.

It belongs to the IRS4 family. Interacts with INP51.

With TAX4, acts as a positive regulator of INP51 activity and phosphatidylinositol 4,5-bisphosphate turnover. Negatively regulates signaling through the cell integrity pathway, including the MAP kinase SLT2. Also seems to be involved in rDNA silencing. The sequence is that of Increased rDNA silencing protein 4 (IRS4) from Saccharomyces cerevisiae (strain ATCC 204508 / S288c) (Baker's yeast).